Here is a 335-residue protein sequence, read N- to C-terminus: Ketol-acid reductoisomerase (NADP(+)) (335 aa).

The region spanning 5–185 is the KARI N-terminal Rossmann domain; it reads SKIYTDKDSN…GATRAGVIPT (181 aa). NADP(+) contacts are provided by residues 28–31, serine 56, and 86–89; these read YGSQ and DMVQ. The active site involves histidine 111. Residue glycine 137 participates in NADP(+) binding. A KARI C-terminal knotted domain is found at 186-331; it reads TFKEETETDL…NQLKDLIQKG (146 aa). The Mg(2+) site is built by aspartate 194, glutamate 198, glutamate 230, and glutamate 234. Serine 255 lines the substrate pocket.

It belongs to the ketol-acid reductoisomerase family. The cofactor is Mg(2+).

The catalysed reaction is (2R)-2,3-dihydroxy-3-methylbutanoate + NADP(+) = (2S)-2-acetolactate + NADPH + H(+). The enzyme catalyses (2R,3R)-2,3-dihydroxy-3-methylpentanoate + NADP(+) = (S)-2-ethyl-2-hydroxy-3-oxobutanoate + NADPH + H(+). It functions in the pathway amino-acid biosynthesis; L-isoleucine biosynthesis; L-isoleucine from 2-oxobutanoate: step 2/4. It participates in amino-acid biosynthesis; L-valine biosynthesis; L-valine from pyruvate: step 2/4. Its function is as follows. Involved in the biosynthesis of branched-chain amino acids (BCAA). Catalyzes an alkyl-migration followed by a ketol-acid reduction of (S)-2-acetolactate (S2AL) to yield (R)-2,3-dihydroxy-isovalerate. In the isomerase reaction, S2AL is rearranged via a Mg-dependent methyl migration to produce 3-hydroxy-3-methyl-2-ketobutyrate (HMKB). In the reductase reaction, this 2-ketoacid undergoes a metal-dependent reduction by NADPH to yield (R)-2,3-dihydroxy-isovalerate. The sequence is that of Ketol-acid reductoisomerase (NADP(+)) from Saccharolobus islandicus (strain Y.G.57.14 / Yellowstone #1) (Sulfolobus islandicus).